A 192-amino-acid polypeptide reads, in one-letter code: NADH-ubiquinone oxidoreductase subunit 9 (192 aa).

This sequence belongs to the complex I 30 kDa subunit family. Complex I is composed of about 30 different subunits.

The protein resides in the mitochondrion inner membrane. It carries out the reaction a ubiquinone + NADH + 5 H(+)(in) = a ubiquinol + NAD(+) + 4 H(+)(out). Functionally, core subunit of the mitochondrial membrane respiratory chain NADH dehydrogenase (Complex I) that is believed to belong to the minimal assembly required for catalysis. Complex I functions in the transfer of electrons from NADH to the respiratory chain. The immediate electron acceptor for the enzyme is believed to be ubiquinone. This is NADH-ubiquinone oxidoreductase subunit 9 (NAD9) from Prototheca wickerhamii.